The following is a 268-amino-acid chain: Undecaprenyl-diphosphatase (268 aa).

7 helical membrane passes run 43–63 (FWNT…VVIY), 83–103 (FVIG…IAGK), 109–129 (LFNP…LMWV), 144–164 (FPLP…IPGV), 184–204 (AAEF…AYDF), 218–238 (IVAI…KAFL), and 246–266 (FTFF…ALAL).

Belongs to the UppP family.

Its subcellular location is the cell inner membrane. The enzyme catalyses di-trans,octa-cis-undecaprenyl diphosphate + H2O = di-trans,octa-cis-undecaprenyl phosphate + phosphate + H(+). Catalyzes the dephosphorylation of undecaprenyl diphosphate (UPP). Confers resistance to bacitracin. The sequence is that of Undecaprenyl-diphosphatase from Nitrobacter hamburgensis (strain DSM 10229 / NCIMB 13809 / X14).